Consider the following 249-residue polypeptide: Green-light absorbing proteorhodopsin (249 aa).

Residues 1-17 (MKLLLILGSVIALPTFA) form the signal peptide. Helical transmembrane passes span 30 to 49 (GVSF…FFFV), 62 to 84 (LTVS…GVWI), 99 to 121 (LLTV…NVAG), 128 to 147 (LVGS…GIMA), 151 to 168 (AFII…ELWA), 189 to 211 (MMYI…YLMG), and 221 to 243 (LIYN…NVAV). Lys-231 bears the N6-(retinylidene)lysine mark.

It belongs to the archaeal/bacterial/fungal opsin family. In terms of processing, contains one covalently linked retinal chromophore.

The protein localises to the cell membrane. Its function is as follows. Light-driven proton pump that generates photothrophic energy. The chain is Green-light absorbing proteorhodopsin from Gamma-proteobacterium EBAC31A08.